A 183-amino-acid polypeptide reads, in one-letter code: Regulatory protein RecX (183 aa).

Polar residues predominate over residues 1 to 12; the sequence is MTSFPHPSTSES. The segment at 1 to 26 is disordered; that stretch reads MTSFPHPSTSESGPDPDSEPNREEQA.

It belongs to the RecX family.

It localises to the cytoplasm. Modulates RecA activity. The chain is Regulatory protein RecX from Mycobacterium sp. (strain JLS).